We begin with the raw amino-acid sequence, 267 residues long: Protein I267L (267 aa).

It belongs to the asfivirus I267L family. In terms of assembly, interacts with host RNF135.

In terms of biological role, plays a role in the inhibition of host RNA Pol-III-RIGI-mediated innate antiviral response. Mechanistically, interacts with host E3 ubiquitin ligase RNF135, disrupting RNF135-RIGI interaction and impairing RNF135-mediated 'Lys-63'-polyubiquitination and activation of RIGI. The chain is Protein I267L from African swine fever virus (strain Badajoz 1971 Vero-adapted) (Ba71V).